The chain runs to 828 residues: DNA gyrase subunit A (828 aa).

In terms of domain architecture, Topo IIA-type catalytic spans 38 to 501 (LPDARDGLKP…SYESIDTEDL (464 aa)). The O-(5'-phospho-DNA)-tyrosine intermediate role is filled by tyrosine 126. The GyrA-box motif lies at 528–534 (QNRGGKG).

The protein belongs to the type II topoisomerase GyrA/ParC subunit family. In terms of assembly, heterotetramer, composed of two GyrA and two GyrB chains. In the heterotetramer, GyrA contains the active site tyrosine that forms a transient covalent intermediate with DNA, while GyrB binds cofactors and catalyzes ATP hydrolysis.

It is found in the cytoplasm. The catalysed reaction is ATP-dependent breakage, passage and rejoining of double-stranded DNA.. In terms of biological role, a type II topoisomerase that negatively supercoils closed circular double-stranded (ds) DNA in an ATP-dependent manner to modulate DNA topology and maintain chromosomes in an underwound state. Negative supercoiling favors strand separation, and DNA replication, transcription, recombination and repair, all of which involve strand separation. Also able to catalyze the interconversion of other topological isomers of dsDNA rings, including catenanes and knotted rings. Type II topoisomerases break and join 2 DNA strands simultaneously in an ATP-dependent manner. This is DNA gyrase subunit A from Helicobacter pylori (strain J99 / ATCC 700824) (Campylobacter pylori J99).